The following is a 215-amino-acid chain: Cardiolipin synthase (CMP-forming) (215 aa).

Helical transmembrane passes span 29–49 (IPNI…WLIL), 60–80 (GWAL…GKLA), 117–137 (LWLT…VGIL), 158–178 (LMYA…ASLA), and 179–199 (AVFG…AGVL).

This sequence belongs to the CDP-alcohol phosphatidyltransferase class-I family. A divalent metal cation is required as a cofactor.

Its subcellular location is the cell membrane. The catalysed reaction is a CDP-1,2-diacyl-sn-glycerol + a 1,2-diacyl-sn-glycero-3-phospho-(1'-sn-glycerol) = a cardiolipin + CMP + H(+). In terms of biological role, catalyzes the synthesis of cardiolipin (CL) (diphosphatidylglycerol) by specifically transferring a phosphatidyl group from CDP-diacylglycerol to phosphatidylglycerol (PG). This Streptomyces coelicolor (strain ATCC BAA-471 / A3(2) / M145) protein is Cardiolipin synthase (CMP-forming).